Here is a 204-residue protein sequence, read N- to C-terminus: MTPPPADDTSGKSGRRTELLDIAATLFAERGLRATTVRDIADAAGILSGSLYHHFDSKESMVDEILRGFLDDLFGKYREIVASGLDSRATLEALVTTSYEAIDASHSAVAIYQDEVKHLVANERFTYLSELNTEFRELWMGVLEAGVKDGSFRSDIDVELAFRFLRDTAWVAVRWYRPGGSVTVDTVAKQYLSIVLDGLASPHN.

The region spanning 13 to 73 is the HTH tetR-type domain; that stretch reads SGRRTELLDI…EILRGFLDDL (61 aa). The H-T-H motif DNA-binding region spans 36-55; that stretch reads TVRDIADAAGILSGSLYHHF.

As to quaternary structure, homodimer.

Controls the expression of a small regulon that may play a role in the utilization of cholesterol. This chain is HTH-type transcriptional repressor KstR2 (kstR2), found in Rhodococcus jostii (strain RHA1).